Consider the following 151-residue polypeptide: UPF0178 protein CPS_3584 (151 aa).

It belongs to the UPF0178 family.

The chain is UPF0178 protein CPS_3584 from Colwellia psychrerythraea (strain 34H / ATCC BAA-681) (Vibrio psychroerythus).